The primary structure comprises 588 residues: Proline--tRNA ligase (588 aa).

The protein belongs to the class-II aminoacyl-tRNA synthetase family. ProS type 1 subfamily. As to quaternary structure, homodimer.

The protein resides in the cytoplasm. It catalyses the reaction tRNA(Pro) + L-proline + ATP = L-prolyl-tRNA(Pro) + AMP + diphosphate. Catalyzes the attachment of proline to tRNA(Pro) in a two-step reaction: proline is first activated by ATP to form Pro-AMP and then transferred to the acceptor end of tRNA(Pro). As ProRS can inadvertently accommodate and process non-cognate amino acids such as alanine and cysteine, to avoid such errors it has two additional distinct editing activities against alanine. One activity is designated as 'pretransfer' editing and involves the tRNA(Pro)-independent hydrolysis of activated Ala-AMP. The other activity is designated 'posttransfer' editing and involves deacylation of mischarged Ala-tRNA(Pro). The misacylated Cys-tRNA(Pro) is not edited by ProRS. The protein is Proline--tRNA ligase of Corynebacterium glutamicum (strain ATCC 13032 / DSM 20300 / JCM 1318 / BCRC 11384 / CCUG 27702 / LMG 3730 / NBRC 12168 / NCIMB 10025 / NRRL B-2784 / 534).